The chain runs to 185 residues: Ribosome-recycling factor (185 aa).

It belongs to the RRF family.

Its subcellular location is the cytoplasm. Responsible for the release of ribosomes from messenger RNA at the termination of protein biosynthesis. May increase the efficiency of translation by recycling ribosomes from one round of translation to another. This is Ribosome-recycling factor from Ectopseudomonas mendocina (strain ymp) (Pseudomonas mendocina).